We begin with the raw amino-acid sequence, 418 residues long: NADH-quinone oxidoreductase subunit D (418 aa).

This sequence belongs to the complex I 49 kDa subunit family. As to quaternary structure, NDH-1 is composed of 14 different subunits. Subunits NuoB, C, D, E, F, and G constitute the peripheral sector of the complex.

It localises to the cell inner membrane. It catalyses the reaction a quinone + NADH + 5 H(+)(in) = a quinol + NAD(+) + 4 H(+)(out). Its function is as follows. NDH-1 shuttles electrons from NADH, via FMN and iron-sulfur (Fe-S) centers, to quinones in the respiratory chain. The immediate electron acceptor for the enzyme in this species is believed to be ubiquinone. Couples the redox reaction to proton translocation (for every two electrons transferred, four hydrogen ions are translocated across the cytoplasmic membrane), and thus conserves the redox energy in a proton gradient. In Neisseria meningitidis serogroup C / serotype 2a (strain ATCC 700532 / DSM 15464 / FAM18), this protein is NADH-quinone oxidoreductase subunit D.